Consider the following 426-residue polypeptide: Cytochrome b-c1 complex subunit 2, mitochondrial (426 aa).

The N-terminal 30 residues, 1–30 (MKSFTRNLRRFQTPRRNLHGISYTPKKVEG), are a transit peptide targeting the mitochondrion.

It belongs to the peptidase M16 family. UQCRC2/QCR2 subfamily. In terms of assembly, component of the ubiquinol-cytochrome c oxidoreductase (cytochrome b-c1 complex, complex III, CIII), a multisubunit enzyme composed of 3 respiratory subunits cytochrome b, cytochrome c1 and Rieske protein, 2 core protein subunits, and additional low-molecular weight protein subunits. The complex exists as an obligatory dimer and forms supercomplexes (SCs) in the inner mitochondrial membrane with cytochrome c oxidase (complex IV, CIV).

It localises to the mitochondrion inner membrane. In terms of biological role, component of the ubiquinol-cytochrome c oxidoreductase, a multisubunit transmembrane complex that is part of the mitochondrial electron transport chain which drives oxidative phosphorylation. The respiratory chain contains 3 multisubunit complexes succinate dehydrogenase (complex II, CII), ubiquinol-cytochrome c oxidoreductase (cytochrome b-c1 complex, complex III, CIII) and cytochrome c oxidase (complex IV, CIV), that cooperate to transfer electrons derived from NADH and succinate to molecular oxygen, creating an electrochemical gradient over the inner membrane that drives transmembrane transport and the ATP synthase. The cytochrome b-c1 complex catalyzes electron transfer from ubiquinol to cytochrome c, linking this redox reaction to translocation of protons across the mitochondrial inner membrane, with protons being carried across the membrane as hydrogens on the quinol. In the process called Q cycle, 2 protons are consumed from the matrix, 4 protons are released into the intermembrane space and 2 electrons are passed to cytochrome c. In Schizosaccharomyces pombe (strain 972 / ATCC 24843) (Fission yeast), this protein is Cytochrome b-c1 complex subunit 2, mitochondrial (qcr2).